Reading from the N-terminus, the 367-residue chain is MKSLVLLLCLAQLWGCHSAPRGLGLIYRQPNCDDPETEEAALVAIDYINQNHPWGYKHTLNQIDEVKVWPRQPSGELFEIEIDTLETTCHVLDPTPVARCSVRQLKEHAVEGDCDFQLLKLDGKFSVVYAKCDSSPDSAEDVRKVCQDCPLLAPLNDTRVVHAAKAALAAFNAQNNGSNFQLEEISRAQLVPLPPSTYVEFTVSGTDCVAKEATEAAKCNLLAEKQYGFCKATLSEKLGGAEVAVTCTVFQTQPVTSQPQPEGANETVPTPVVDPDAPPSPPLGAPGLPPAGSPPDSHVLLAAPPGHQLHWAHYDLRHTFMGVVSLGSPSGEASHPRKTRTVVQPSVGAAAGPVVPPCPGRIRHFKV.

The first 18 residues, 1-18 (MKSLVLLLCLAQLWGCHS), serve as a signal peptide directing secretion. One can recognise a Cystatin fetuin-A-type 1 domain in the interval 27 to 133 (YRQPNCDDPE…KFSVVYAKCD (107 aa)). 6 disulfides stabilise this stretch: C32–C358, C89–C100, C114–C132, C146–C149, C208–C219, and C230–C247. Phosphoserine occurs at positions 134, 135, and 138. In terms of domain architecture, Cystatin fetuin-A-type 2 spans 144 to 255 (KVCQDCPLLA…TCTVFQTQPV (112 aa)). N-linked (GlcNAc...) asparagine glycans are attached at residues N156 and N176. A disordered region spans residues 254 to 301 (PVTSQPQPEGANETVPTPVVDPDAPPSPPLGAPGLPPAGSPPDSHVLL). Residue N265 is glycosylated (N-linked (GlcNAc...) asparagine). The span at 276-293 (DAPPSPPLGAPGLPPAGS) shows a compositional bias: pro residues. Residues 301-340 (LAAPPGHQLHWAHYDLRHTFMGVVSLGSPSGEASHPRKTR) constitute a propeptide, connecting peptide. T319 carries the phosphothreonine modification. Phosphoserine occurs at positions 325, 328, and 330. T339 carries an O-linked (GalNAc...) threonine glycan.

Belongs to the fetuin family. Alpha-2-HS glycoprotein derives from this precursor, when the connecting peptide is cleaved off. The two chains A and B are held together by a single disulfide bond. Post-translationally, phosphorylated by FAM20C in the extracellular medium.

Its subcellular location is the secreted. Promotes endocytosis, possesses opsonic properties and influences the mineral phase of bone. Shows affinity for calcium and barium ions. This chain is Alpha-2-HS-glycoprotein (AHSG), found in Pan troglodytes (Chimpanzee).